Here is a 253-residue protein sequence, read N- to C-terminus: MATHRLVMVRHGESSWNQENRFCGWFDAELSEKGAEEAKRGATAIKDAKIEFDICYTSVLKRAIRTLWTILDVTDQMWVPVVRTWRLNERHYGGLTGLNKAETAAKHGEEQVKIWRRSFDTPPPPMDEKHNYYASISKDRRYAGLKPEELPTCESLKDTIARALPFWNEEIAPKIKAGKRVLIAAHGNSLRGIVKHLEGMSDQAIMELNLPTGIPIVYELNQELKPTKPMRFLGDEETVRKAMEAVAAQGKAK.

Position 3 is a phosphothreonine (Thr3). Substrate contacts are provided by residues 10–17 (RHGESSWN), 23–24 (CG), Arg62, 89–92 (ERHY), Lys100, and 116–117 (RR). Residue His11 is the Tele-phosphohistidine intermediate of the active site. A phosphoserine mark is found at Ser14 and Ser15. The Proton donor/acceptor role is filled by Glu89. Ser118 bears the Phosphoserine mark. A Phosphothreonine modification is found at Thr121. Tyr132 and Tyr133 each carry phosphotyrosine. Ser135 is modified (phosphoserine). A Phosphothreonine modification is found at Thr152. 187-188 (GN) serves as a coordination point for substrate.

The protein belongs to the phosphoglycerate mutase family. BPG-dependent PGAM subfamily. Homodimer. Interacts with ENO1.

It catalyses the reaction (2R)-2-phosphoglycerate = (2R)-3-phosphoglycerate. It carries out the reaction (2R)-3-phospho-glyceroyl phosphate = (2R)-2,3-bisphosphoglycerate + H(+). Functionally, interconversion of 3- and 2-phosphoglycerate with 2,3-bisphosphoglycerate as the primer of the reaction. Can also catalyze the reaction of EC 5.4.2.4 (synthase), but with a reduced activity. The polypeptide is Phosphoglycerate mutase 2 (Pgam2) (Rattus norvegicus (Rat)).